Consider the following 274-residue polypeptide: Kit ligand (274 aa).

A signal peptide spans 1 to 25; that stretch reads MKKTQTWIITCIYLQLLLFNPLVRT. The Extracellular segment spans residues 26–215; that stretch reads KGICRNRVTD…ANPLGDSNLQ (190 aa). 2 disulfides stabilise this stretch: C29-C114 and C68-C164. 4 N-linked (GlcNAc...) asparagine glycosylation sites follow: N90, N97, N145, and N196. A helical membrane pass occupies residues 216 to 238; the sequence is WAAMALPAFFSLVIGFAFGALYW. Over 239–274 the chain is Cytoplasmic; it reads KKKQPNLTRTAENIQINEEDNEISMLQEKEREFQEV.

It belongs to the SCF family. In terms of assembly, homodimer, non-covalently linked. Heterotetramer with KIT, binding two KIT molecules; thereby mediates KIT dimerization and subsequent activation by autophosphorylation. A soluble form is produced by proteolytic processing of isoform 1 in the extracellular domain.

Its subcellular location is the cytoplasm. It is found in the cytoskeleton. It localises to the cell membrane. The protein localises to the cell projection. The protein resides in the lamellipodium. Its subcellular location is the filopodium. It is found in the secreted. In terms of biological role, ligand for the receptor-type protein-tyrosine kinase KIT. Plays an essential role in the regulation of cell survival and proliferation, hematopoiesis, stem cell maintenance, gametogenesis, mast cell development, migration and function, and in melanogenesis. KITLG/SCF binding can activate several signaling pathways. Promotes phosphorylation of PIK3R1, the regulatory subunit of phosphatidylinositol 3-kinase, and subsequent activation of the kinase AKT1. KITLG/SCF and KIT also transmit signals via GRB2 and activation of RAS, RAF1 and the MAP kinases MAPK1/ERK2 and/or MAPK3/ERK1. KITLG/SCF and KIT promote activation of STAT family members STAT1, STAT3 and STAT5. KITLG/SCF and KIT promote activation of PLCG1, leading to the production of the cellular signaling molecules diacylglycerol and inositol 1,4,5-trisphosphate. KITLG/SCF acts synergistically with other cytokines, probably interleukins. The protein is Kit ligand (KITLG) of Neovison vison (American mink).